A 415-amino-acid polypeptide reads, in one-letter code: Esterase FrsA (415 aa).

The protein belongs to the FrsA family.

The catalysed reaction is a carboxylic ester + H2O = an alcohol + a carboxylate + H(+). Its function is as follows. Catalyzes the hydrolysis of esters. This is Esterase FrsA from Yersinia enterocolitica serotype O:8 / biotype 1B (strain NCTC 13174 / 8081).